Reading from the N-terminus, the 252-residue chain is Imidazole glycerol phosphate synthase subunit HisF (252 aa).

Residues D11 and D130 contribute to the active site.

This sequence belongs to the HisA/HisF family. In terms of assembly, heterodimer of HisH and HisF.

The protein resides in the cytoplasm. It carries out the reaction 5-[(5-phospho-1-deoxy-D-ribulos-1-ylimino)methylamino]-1-(5-phospho-beta-D-ribosyl)imidazole-4-carboxamide + L-glutamine = D-erythro-1-(imidazol-4-yl)glycerol 3-phosphate + 5-amino-1-(5-phospho-beta-D-ribosyl)imidazole-4-carboxamide + L-glutamate + H(+). Its pathway is amino-acid biosynthesis; L-histidine biosynthesis; L-histidine from 5-phospho-alpha-D-ribose 1-diphosphate: step 5/9. Its function is as follows. IGPS catalyzes the conversion of PRFAR and glutamine to IGP, AICAR and glutamate. The HisF subunit catalyzes the cyclization activity that produces IGP and AICAR from PRFAR using the ammonia provided by the HisH subunit. This Thermococcus onnurineus (strain NA1) protein is Imidazole glycerol phosphate synthase subunit HisF.